A 421-amino-acid chain; its full sequence is Functional amyloid transporter FapF (421 aa).

Residues 1–24 (MTQTLSLRAVLCATTLVSPFLAQA) form the signal peptide. A coiled-coil region spans residues 23 to 64 (QAATESEVEALKKELLELRQRYEAQQNALMVLEQRVRQVEAQ).

It belongs to the amyloid transporter (TC 9.B.153) family.

The protein resides in the secreted. Its subcellular location is the cell surface. It is found in the cell outer membrane. In terms of biological role, transports fibril components across the outer membrane. Upon overexpression of the endogenous six-gene locus (fapA-fapF), cells form large clumps during liquid growth, make large amounts of biofilm and produce amyloid fibrils. This is Functional amyloid transporter FapF from Pseudomonas aeruginosa (strain ATCC 15692 / DSM 22644 / CIP 104116 / JCM 14847 / LMG 12228 / 1C / PRS 101 / PAO1).